The primary structure comprises 38 residues: Glucagon-like peptide (38 aa).

It belongs to the glucagon family.

It is found in the secreted. The sequence is that of Glucagon-like peptide from Hydrolagus colliei (Spotted ratfish).